We begin with the raw amino-acid sequence, 372 residues long: Serine protease inhibitor 42Dd (372 aa).

Positions 1–15 are cleaved as a signal peptide; that stretch reads MYYLCIFLWVTSVAC. Residues Asn197 and Asn232 are each glycosylated (N-linked (GlcNAc...) asparagine).

This sequence belongs to the serpin family. As to expression, expressed in the ovary.

It localises to the secreted. Serine protease inhibitor with activity toward trypsin. Involved in innate immunity to fungal infection by negatively regulating the Toll signaling pathway and suppressing the expression of the antifungal peptide drosomycin. Acts upstream of SPE and grass, and downstream of the fungal cell wall pattern recognition receptor GNBP3. May function specifically in the GNBP3-dependent beta-1,3-glucan branch of the Toll pathway. This is Serine protease inhibitor 42Dd from Drosophila melanogaster (Fruit fly).